The following is a 42-amino-acid chain: Photosystem I reaction center subunit IX (42 aa).

The helical transmembrane segment at 8 to 28 (YLSTAPVIGVLWMTFTAGFII) threads the bilayer.

This sequence belongs to the PsaJ family.

The protein resides in the plastid. The protein localises to the chloroplast thylakoid membrane. May help in the organization of the PsaE and PsaF subunits. The chain is Photosystem I reaction center subunit IX from Pyropia yezoensis (Susabi-nori).